Here is a 932-residue protein sequence, read N- to C-terminus: Myelin gene regulatory factor-like A (932 aa).

Composition is skewed to low complexity over residues 1-19 and 33-48; these read MDGY…QQHQ and QQQQ…QQQQ. Disordered stretches follow at residues 1–63, 152–256, 269–328, 540–568, 582–601, 613–660, and 680–726; these read MDGY…ISNG, VNSP…LSSS, TNTQ…NENP, VTPP…SNNM, TMNI…LSQL, TQNH…NNNN, and NINN…CHWN. Residues 49–59 show a composition bias toward polar residues; that stretch reads PMNGSNNQLLG. Positions 127-154 form a coiled coil; the sequence is LDSSFLMLQQQLQDQQQQIAQFNSSVNS. 2 stretches are compositionally biased toward low complexity: residues 152–249 and 277–294; these read VNSP…ANNT and PRSI…TNSP. The NDT80 DNA-binding region spans 286-546; sequence PNLSPTNSPI…ATQVTPPGDL (261 aa). Over residues 311 to 328 the composition is skewed to polar residues; that stretch reads ENENSDPPSPMTQYNENP. 2 stretches are compositionally biased toward low complexity: residues 615 to 660 and 680 to 721; these read NHNN…NNNN and NINN…NNNN. Residues 767 to 877 enclose the Peptidase S74 domain; that stretch reads SDLRIKYDLK…KQMDEMKLKL (111 aa). The stretch at 863 to 895 forms a coiled coil; sequence TQELSKQMDEMKLKLITYESKLKNLKKKSKNQT. Residues 895-915 traverse the membrane as a helical segment; the sequence is TILLIIFMITFLLVALYMYKP.

It is found in the membrane. Transcription factor which acts as a key regulator of pstA (prestalk-A) cells differentiation. Essential for ecmA-specific gene expression. In Dictyostelium discoideum (Social amoeba), this protein is Myelin gene regulatory factor-like A (mrfA).